Reading from the N-terminus, the 334-residue chain is Inositol 2-dehydrogenase (334 aa).

It belongs to the Gfo/Idh/MocA family. As to quaternary structure, homotetramer.

It catalyses the reaction myo-inositol + NAD(+) = scyllo-inosose + NADH + H(+). In terms of biological role, involved in the oxidation of myo-inositol (MI) to 2-keto-myo-inositol (2KMI or 2-inosose). This is Inositol 2-dehydrogenase from Cereibacter sphaeroides (strain ATCC 17023 / DSM 158 / JCM 6121 / CCUG 31486 / LMG 2827 / NBRC 12203 / NCIMB 8253 / ATH 2.4.1.) (Rhodobacter sphaeroides).